The sequence spans 843 residues: Transmembrane protease serine 7 (843 aa).

Over 1-76 (MDKENSDVSA…KVPFWNVQNK (76 aa)) the chain is Cytoplasmic. Residues 27-67 (AQKKLPVRRPPLPGRRLPLPGRRPPQRPIGKAKPKKQSKKK) are disordered. Over residues 56-67 (GKAKPKKQSKKK) the composition is skewed to basic residues. Residues 77–97 (IILFTVFLFILAVIAWTLLWL) form a helical; Signal-anchor for type II membrane protein membrane-spanning segment. At 98–843 (YISKTESKDA…WIHKYVPSLL (746 aa)) the chain is on the extracellular side. The SEA domain occupies 106 to 234 (DAFYFAGMFR…DSVVLNAGLR (129 aa)). 12 cysteine pairs are disulfide-bonded: cysteine 247–cysteine 273, cysteine 299–cysteine 322, cysteine 365–cysteine 396, cysteine 484–cysteine 496, cysteine 491–cysteine 509, cysteine 503–cysteine 518, cysteine 525–cysteine 544, cysteine 538–cysteine 553, cysteine 559–cysteine 571, cysteine 566–cysteine 585, cysteine 579–cysteine 594, and cysteine 631–cysteine 647. CUB domains lie at 247–360 (CSQY…FEVI) and 365–481 (CENT…YNIS). LDL-receptor class A domains are found at residues 483–519 (PCPVGSFRCSSGLCVPQAQRCDGVNDCFDESDELFCV), 517–554 (FCVSPQPACNTSSFRQHGPLICDGFRDCENGRDEQNCT), and 558–595 (PCNNRTFKCGNDICFRKQNAKCDGTVDCPDGSDEEGCT). The Peptidase S1 domain occupies 606-840 (IIGGTDTLEG…FVPWIHKYVP (235 aa)). Residues histidine 646 and aspartate 694 each act as charge relay system in the active site. Disulfide bonds link cysteine 730-cysteine 796 and cysteine 762-cysteine 775. The active-site Charge relay system is the serine 790.

It belongs to the peptidase S1 family. As to quaternary structure, forms a heterodimer with SERPINA5. N-glycosylated. Expressed in brain, ovary, testis, salivary gland, trachea and lung.

It localises to the cell membrane. In terms of biological role, serine protease which preferentially hydrolyzes peptides with Arg at the P1 position. This is Transmembrane protease serine 7 (TMPRSS7) from Homo sapiens (Human).